A 94-amino-acid polypeptide reads, in one-letter code: RING finger protein Z (94 aa).

The tract at residues M1–S22 is disordered. G2 is lipidated: N-myristoyl glycine; by host. An RING-type; atypical zinc finger spans residues C39–C75. The PTAP/PSAP motif motif lies at P89–P92.

The protein belongs to the arenaviridae Z protein family. In terms of assembly, interacts with protein NP; this interaction probably directs the encapsidated genome to budding sites. Interacts (via RING domain) with polymerase L; this interaction inhibits viral transcription and replication, Z partially blocks the product exit tunnel for the releasing nascent RNA product. Interacts with the glycoprotein complex; this interaction plays a role in virion budding. Interacts with host eIF4E; this interaction results in eIF4E reduced affinity for its substrate, the 5'-m7 G cap structure. Interacts (via late-budding domain) with host TSG101; this interaction is essential for budding and release of viral particles. Interacts with host RPLP0; this interaction may serve to load ribosome-like particles inside the virion. Interacts with host PML; this interaction induces PML bodies redistribution in the cytoplasm upon viral infection. Myristoylation is required for the role of RING finger protein Z in assembly and budding.

Its subcellular location is the virion. It localises to the host cytoplasm. It is found in the host perinuclear region. The protein localises to the host cell membrane. Functionally, plays a crucial role in virion assembly and budding. Expressed late in the virus life cycle, it acts as an inhibitor of viral transcription and RNA synthesis by interacting with the viral polymerase L. Presumably recruits the NP encapsidated genome to cellular membranes at budding sites via direct interaction with NP. Plays critical roles in the final steps of viral release by interacting with host TSG101, a member of the vacuolar protein-sorting pathway and using other cellular host proteins involved in vesicle formation pathway. The budding of the virus progeny occurs after association of protein Z with the viral glycoprotein complex SSP-GP1-GP2 at the cell periphery, step that requires myristoylation of protein Z. Also selectively represses protein production by associating with host eIF4E. In cell-based minigenome assay, has an inhibitory effect on the ribonucleoprotein machinery (vRNP), which is responsible for the replication and transcription of the viral genome. This Calomys callosus (Large vesper mouse) protein is RING finger protein Z.